Consider the following 421-residue polypeptide: MAAISRAIKQELLEDLKPEMYLPPKSTRRRAKVKTEEKVDVKTLVKSKSKKRRAAKNELEENVEFVRRFAPRRPYQWRGRQVRALPRPGIPVVFTPGQRSGVASKRSYDEVYADEDVLDQSGNMINEFAYGKRVKMLTHKNPTPSQVPITPQEPIARPGEAGLLPTVQVLAPRDSKHETMLPVTKSEGGDVKVENKGFEQITPQLGVQTVDIKVPVKRKSEVEDEILKRAKMEPFETTVKMEYSEQPQVEVFDTGVEPSSFFEVRSQARPIAVARKRRVPTVEVMEVQQSDHTAPTASAAPVANVIVGPHLSRRPSRWGPANAIYPDYVYHPSISAKKTMGPRPTGRVSRWGPANSIFPEVRLHPSMVSAVTRAAPRKSTKSRRRRRVRTRRAFVLPAGTKTGVMLPQNIRYHPSILFRRA.

The protein belongs to the adenoviridae core-capsid bridging protein family. Monomer. Homodimer. Exists in equilibrium between monomers and dimers in solution. Interacts with the histone-like nucleoprotein; this interactions bridge the virus core to the capsid. Interacts with core protein X; this interactions bridge the virus core to the capsid. Interacts with the endosome lysis protein VI; this interactions bridge the virus core to the capsid. Interacts with the peripentonal hexons. Interacts with host NPM1; this interaction might play a role in virus assembly.

Its subcellular location is the virion. It localises to the host nucleus. The protein localises to the host nucleolus. Functionally, associates loosely with the viral DNA to form an outer shell around the nucleoprotein-DNA complex and links it with the capsid by binding the endosome lysis protein. Dissociates from the viral genome during entry. Might be involved in nuclear capsid assembly of the viral particles through its association with NPM1/nucleophosmin. The polypeptide is Core-capsid bridging protein (Canine adenovirus serotype 1 (strain CLL) (CAdV-1)).